Reading from the N-terminus, the 360-residue chain is Nucleoporin SEH1-B (360 aa).

6 WD repeats span residues 10 to 49, 55 to 96, 111 to 152, 160 to 210, 217 to 258, and 276 to 315; these read DHKD…NWHC, THSG…SNDK, DSRT…NLSQ, SCKL…RKYA, SVSD…KELS, and NHNS…NWKC.

Belongs to the WD repeat SEC13 family. As to quaternary structure, component of the Nup107-160 subcomplex of the nuclear pore complex (NPC). The Nup107-160 subcomplex includes NUP160, NUP133, NUP107, NUP98, NUP85, NUP43, NUP37, SEH1 and SEC13. Component of the GATOR2 subcomplex, composed of MIOS, SEC13, SEH1L, WDR24 and WDR59. The GATOR2 complex interacts with CASTOR1 and CASTOR2; the interaction is negatively regulated by arginine. The GATOR2 complex interacts with SESN1, SESN2 and SESN3; the interaction is negatively regulated by amino acids.

The protein localises to the chromosome. It localises to the centromere. The protein resides in the kinetochore. Its subcellular location is the nucleus. It is found in the nuclear pore complex. The protein localises to the lysosome membrane. Its activity is regulated as follows. The GATOR2 complex is negatively regulated by the upstream amino acid sensors CASTOR1 and SESN2, which sequester the GATOR2 complex in absence of amino acids. In the presence of abundant amino acids, GATOR2 is released from CASTOR1 and SESN2 and activated. In terms of biological role, component of the Nup107-160 subcomplex of the nuclear pore complex (NPC). The Nup107-160 subcomplex is required for the assembly of a functional NPC. The Nup107-160 subcomplex is also required for normal kinetochore microtubule attachment, mitotic progression and chromosome segregation. This subunit plays a role in recruitment of the Nup107-160 subcomplex to the kinetochore. Functionally, as a component of the GATOR2 complex, functions as an activator of the amino acid-sensing branch of the mTORC1 signaling pathway. The GATOR2 complex indirectly activates mTORC1 through the inhibition of the GATOR1 subcomplex. GATOR2 probably acts as an E3 ubiquitin-protein ligase toward GATOR1. In the presence of abundant amino acids, the GATOR2 complex mediates ubiquitination of the NPRL2 core component of the GATOR1 complex, leading to GATOR1 inactivation. In the absence of amino acids, GATOR2 is inhibited, activating the GATOR1 complex. The protein is Nucleoporin SEH1-B (seh1l-b) of Xenopus laevis (African clawed frog).